The following is a 369-amino-acid chain: Putative FAD-dependent oxidoreductase LodB (369 aa).

FAD-binding positions include 10-14 and R103; that span reads GGGPA.

The cofactor is FAD.

The protein resides in the cytoplasm. Is required for lysine-epsilon oxidase (LOD) activity in M.mediterranea. May be involved in the generation of the quinonic cofactor of LodA, leading to the active form of LodA containing a tyrosine-derived quinone cofactor. This chain is Putative FAD-dependent oxidoreductase LodB (lodB), found in Marinomonas mediterranea (strain ATCC 700492 / JCM 21426 / NBRC 103028 / MMB-1).